A 303-amino-acid chain; its full sequence is Aspartate carbamoyltransferase catalytic subunit (303 aa).

Carbamoyl phosphate-binding residues include arginine 54 and threonine 55. Lysine 83 contributes to the L-aspartate binding site. Arginine 104, histidine 132, and glutamine 135 together coordinate carbamoyl phosphate. Positions 164 and 226 each coordinate L-aspartate. 2 residues coordinate carbamoyl phosphate: leucine 265 and proline 266.

It belongs to the aspartate/ornithine carbamoyltransferase superfamily. ATCase family. Heterooligomer of catalytic and regulatory chains.

It carries out the reaction carbamoyl phosphate + L-aspartate = N-carbamoyl-L-aspartate + phosphate + H(+). It participates in pyrimidine metabolism; UMP biosynthesis via de novo pathway; (S)-dihydroorotate from bicarbonate: step 2/3. Catalyzes the condensation of carbamoyl phosphate and aspartate to form carbamoyl aspartate and inorganic phosphate, the committed step in the de novo pyrimidine nucleotide biosynthesis pathway. The sequence is that of Aspartate carbamoyltransferase catalytic subunit from Methanocorpusculum labreanum (strain ATCC 43576 / DSM 4855 / Z).